The following is a 944-amino-acid chain: Protein translocase subunit SecA (944 aa).

ATP contacts are provided by residues glutamine 87, glycine 105–threonine 109, and aspartate 494. The disordered stretch occupies residues histidine 894–valine 944. Positions glycine 901–threonine 911 are enriched in basic and acidic residues. Zn(2+)-binding residues include cysteine 925, cysteine 927, cysteine 936, and histidine 937.

The protein belongs to the SecA family. As to quaternary structure, monomer and homodimer. Part of the essential Sec protein translocation apparatus which comprises SecA, SecYEG and auxiliary proteins SecDF-YajC and YidC. Zn(2+) is required as a cofactor.

Its subcellular location is the cell inner membrane. The protein localises to the cytoplasm. It carries out the reaction ATP + H2O + cellular proteinSide 1 = ADP + phosphate + cellular proteinSide 2.. Part of the Sec protein translocase complex. Interacts with the SecYEG preprotein conducting channel. Has a central role in coupling the hydrolysis of ATP to the transfer of proteins into and across the cell membrane, serving as an ATP-driven molecular motor driving the stepwise translocation of polypeptide chains across the membrane. This Anaeromyxobacter sp. (strain Fw109-5) protein is Protein translocase subunit SecA.